The sequence spans 68 residues: DNA-directed RNA polymerase subunit omega (68 aa).

This sequence belongs to the RNA polymerase subunit omega family. The RNAP catalytic core consists of 2 alpha, 1 beta, 1 beta' and 1 omega subunit. When a sigma factor is associated with the core the holoenzyme is formed, which can initiate transcription.

It carries out the reaction RNA(n) + a ribonucleoside 5'-triphosphate = RNA(n+1) + diphosphate. Its function is as follows. Promotes RNA polymerase assembly. Latches the N- and C-terminal regions of the beta' subunit thereby facilitating its interaction with the beta and alpha subunits. This chain is DNA-directed RNA polymerase subunit omega, found in Alkaliphilus metalliredigens (strain QYMF).